We begin with the raw amino-acid sequence, 255 residues long: Imidazole glycerol phosphate synthase subunit HisF (255 aa).

Active-site residues include aspartate 12 and aspartate 131.

This sequence belongs to the HisA/HisF family. In terms of assembly, heterodimer of HisH and HisF.

It is found in the cytoplasm. It carries out the reaction 5-[(5-phospho-1-deoxy-D-ribulos-1-ylimino)methylamino]-1-(5-phospho-beta-D-ribosyl)imidazole-4-carboxamide + L-glutamine = D-erythro-1-(imidazol-4-yl)glycerol 3-phosphate + 5-amino-1-(5-phospho-beta-D-ribosyl)imidazole-4-carboxamide + L-glutamate + H(+). Its pathway is amino-acid biosynthesis; L-histidine biosynthesis; L-histidine from 5-phospho-alpha-D-ribose 1-diphosphate: step 5/9. IGPS catalyzes the conversion of PRFAR and glutamine to IGP, AICAR and glutamate. The HisF subunit catalyzes the cyclization activity that produces IGP and AICAR from PRFAR using the ammonia provided by the HisH subunit. This chain is Imidazole glycerol phosphate synthase subunit HisF, found in Neisseria gonorrhoeae (strain ATCC 700825 / FA 1090).